We begin with the raw amino-acid sequence, 104 residues long: NADH-quinone oxidoreductase subunit K (104 aa).

3 helical membrane-spanning segments follow: residues 4 to 24 (VAYY…AFLI), 28 to 48 (IITI…SFVA), and 64 to 84 (IFVF…LAII).

Belongs to the complex I subunit 4L family. NDH-1 is composed of 14 different subunits. Subunits NuoA, H, J, K, L, M, N constitute the membrane sector of the complex.

It is found in the cell inner membrane. The enzyme catalyses a quinone + NADH + 5 H(+)(in) = a quinol + NAD(+) + 4 H(+)(out). NDH-1 shuttles electrons from NADH, via FMN and iron-sulfur (Fe-S) centers, to quinones in the respiratory chain. The immediate electron acceptor for the enzyme in this species is believed to be ubiquinone. Couples the redox reaction to proton translocation (for every two electrons transferred, four hydrogen ions are translocated across the cytoplasmic membrane), and thus conserves the redox energy in a proton gradient. The chain is NADH-quinone oxidoreductase subunit K from Acidobacterium capsulatum (strain ATCC 51196 / DSM 11244 / BCRC 80197 / JCM 7670 / NBRC 15755 / NCIMB 13165 / 161).